Here is a 341-residue protein sequence, read N- to C-terminus: MLAARFASRAFPRTRLYSTAPKRSLKELVTELRSQADVSPIQAGQALKASDMDVSKALLWLEKQRTQSAVKKAAKVADRTANEGLIGTTVLSSGVANGRRVGVRAAMVELNCETDFVARNELFANLLEDITHTAAFISEPANAETFMQPFSMETLQNAPLLSQTKPSQNGKATVSEAMRDLTGRVGEKISLRRALTVVRDPFTSSQPDLALRVAARVHQSVFNPTQGRIGSLALLALKSKRLSEAIASQTFQDDLDKLCQALGRQVIGFPTTCIRSPPGTTDEGALYDQPFSMFIGPGNDQSVGAFLQSWAQERSLVNKDEEQSAGVEVLEFAKWTVGDVV.

A mitochondrion-targeting transit peptide spans 1–17 (MLAARFASRAFPRTRLY).

It belongs to the EF-Ts family.

The protein localises to the mitochondrion. Its function is as follows. Associates with the EF-Tu.GDP complex and induces the exchange of GDP to GTP. It remains bound to the aminoacyl-tRNA.EF-Tu.GTP complex up to the GTP hydrolysis stage on the ribosome. The chain is Elongation factor Ts, mitochondrial 2 from Postia placenta (strain ATCC 44394 / Madison 698-R) (Brown rot fungus).